Here is a 1410-residue protein sequence, read N- to C-terminus: Ribosome-binding protein 1 (1410 aa).

At 1–7 the chain is on the lumenal side; sequence MDIYDTQ. A helical transmembrane segment spans residues 8–28; the sequence is TLGVVVFGGFMVVSAIGIFLV. Topologically, residues 29–1410 are cytoplasmic; the sequence is STFSMKETSY…GSSSKEGTSV (1382 aa). 2 disordered regions span residues 44-90 and 129-152; these read NQRK…DPAP and QEKL…VEPA. Residues 52 to 63 are compositionally biased toward basic residues; sequence THHQKVEKKKKE. Positions 64–88 are enriched in basic and acidic residues; the sequence is KTVEKKGKTKKKEEKPNGKIPDHDP. Residue Lys148 forms a Glycyl lysine isopeptide (Lys-Gly) (interchain with G-Cter in SUMO2) linkage. Residues Ser159 and Ser165 each carry the phosphoserine modification. 2 disordered regions span residues 173–648 and 895–925; these read APKE…PLYL and QSSH…LQSS. 2 stretches are compositionally biased toward polar residues: residues 191–209 and 225–238; these read TPAT…QNQS and TPNQ…TPNQ. Repeat copies occupy residues 197–206, 207–216, 217–226, 227–236, 237–246, 247–256, 257–266, 267–276, 277–286, 287–296, 297–306, 307–316, 317–326, 327–336, 337–346, 347–356, 357–366, 367–376, 377–386, 387–396, 397–406, 407–416, 417–426, 427–436, 437–446, 447–456, 457–466, 467–476, 477–486, 487–496, 497–506, 507–516, and 517–526. The interval 197-604 is 41 X 10 AA approximate tandem repeats of [TN]-Q-[GSA]-[KRQT]-K-[ATGSV]-[ED]-[GTAS]-[ATIS]-[PQTAS]; it reads TQGKKAEGTQ…NQGKKTESAS (408 aa). 4 positions are modified to phosphothreonine: Thr225, Thr235, Thr245, and Thr255. Polar residues-rich tracts occupy residues 265–278 and 295–519; these read AQNQ…TPNQ and AQNQ…QNQG. Basic and acidic residues predominate over residues 520–532; sequence KKTEGAQGKKAER. The 34; approximate repeat unit spans residues 527–534; sequence GKKAERSP. The residue at position 533 (Ser533) is a Phosphoserine. Residues 535–544 form repeat 35; it reads NQGKKGEGAP. One copy of the 36; approximate repeat lies at 545–554; it reads IQGKKADSVA. The segment covering 553 to 567 has biased composition (polar residues); sequence VANQGTKVEGITNQG. Tandem repeats lie at residues 555-564 and 565-574. Residues 568 to 581 show a composition bias toward basic and acidic residues; that stretch reads KKAEGSPSEGKKAE. Residues Ser573 and Ser583 each carry the phosphoserine modification. The 39; approximate repeat unit spans residues 575 to 584; the sequence is SEGKKAEGSP. 2 consecutive repeat copies span residues 585-594 and 595-604. The span at 602–612 shows a compositional bias: polar residues; the sequence is SASVQGRNTDV. Ser615 carries the phosphoserine modification. Lys620 is covalently cross-linked (Glycyl lysine isopeptide (Lys-Gly) (interchain with G-Cter in SUMO1)). A Phosphoserine modification is found at Ser900. At Lys932 the chain carries N6-acetyllysine. Phosphoserine occurs at positions 959 and 978. 4 disordered regions span residues 1093–1122, 1260–1287, 1330–1362, and 1378–1410; these read GPTL…ETQS, EMKS…EQDP, EKLR…LTSD, and QEQL…GTSV. Ser1276 and Ser1277 each carry phosphoserine. Basic and acidic residues-rich tracts occupy residues 1347–1360 and 1381–1403; these read SQLK…KKLT and LARE…DGSS.

It is found in the endoplasmic reticulum membrane. In terms of biological role, acts as a ribosome receptor and mediates interaction between the ribosome and the endoplasmic reticulum membrane. In Homo sapiens (Human), this protein is Ribosome-binding protein 1 (RRBP1).